The sequence spans 448 residues: Alginate biosynthesis transcriptional regulatory protein AlgB (448 aa).

The Response regulatory domain occupies arginine 10–leucine 124. A 4-aspartylphosphate modification is found at aspartate 59. Residues leucine 147 to isoleucine 376 form the Sigma-54 factor interaction domain. Residues glycine 175–glycine 182 and alanine 238–glutamate 247 each bind ATP. Residues leucine 425–lysine 444 constitute a DNA-binding region (H-T-H motif).

It functions in the pathway glycan biosynthesis; alginate biosynthesis [regulation]. Functionally, positive regulator of the alginate biosynthetic gene algD. The sequence is that of Alginate biosynthesis transcriptional regulatory protein AlgB (algB) from Pseudomonas syringae pv. tomato (strain ATCC BAA-871 / DC3000).